We begin with the raw amino-acid sequence, 476 residues long: Serine/threonine-protein kinase chk-2 (476 aa).

One can recognise an FHA domain in the interval 66-127 (FVCGRGSDDA…NGTLVNQEMI (62 aa)). Positions 170–436 (HVTSHSLGKG…AVELMSTQWM (267 aa)) constitute a Protein kinase domain. ATP is bound by residues 177–184 (GKGGFGKV), lysine 199, and 252–258 (EYVGGGE). The active-site Proton acceptor is aspartate 301. ATP-binding positions include 305–306 (EN) and aspartate 322.

This sequence belongs to the protein kinase superfamily. CAMK Ser/Thr protein kinase family. CHK2 subfamily. It depends on Mg(2+) as a cofactor. Highly expressed in germline tissue.

Its subcellular location is the nucleus. The enzyme catalyses L-seryl-[protein] + ATP = O-phospho-L-seryl-[protein] + ADP + H(+). It carries out the reaction L-threonyl-[protein] + ATP = O-phospho-L-threonyl-[protein] + ADP + H(+). Serine/threonine-protein kinase which is required for checkpoint-mediated cell cycle arrest, activation of DNA repair and apoptosis in response to the presence of DNA double-strand breaks. May also negatively regulate cell cycle progression during unperturbed cell cycles. Phosphorylates and inhibits cdc25 phosphatase, preventing entry into mitosis. Required for nuclear reorganization and homologous chromosome pairing during meiotic prophase. This Caenorhabditis elegans protein is Serine/threonine-protein kinase chk-2 (chk-2).